Reading from the N-terminus, the 242-residue chain is Arginine transport ATP-binding protein ArtP (242 aa).

In terms of domain architecture, ABC transporter spans 3 to 241; the sequence is IQLNGINCFY…QTEAFKNYLS (239 aa). Residue 35–42 participates in ATP binding; it reads GPSGAGKS.

Belongs to the ABC transporter superfamily. The complex is composed of two ATP-binding proteins (ArtP), two transmembrane proteins (ArtM and ArtQ) and two solute-binding proteins (ArtJ and ArtI).

The protein resides in the cell inner membrane. The catalysed reaction is a polar amino acid(out) + ATP + H2O = a polar amino acid(in) + ADP + phosphate + H(+). It carries out the reaction L-arginine(out) + ATP + H2O = L-arginine(in) + ADP + phosphate + H(+). Part of the ABC transporter complex ArtPIQMJ involved in arginine transport. Probably responsible for energy coupling to the transport system. The chain is Arginine transport ATP-binding protein ArtP (artP) from Escherichia coli O157:H7.